Here is a 335-residue protein sequence, read N- to C-terminus: UPF0324 membrane protein gbs1193 (335 aa).

A run of 9 helical transmembrane segments spans residues 20-42, 57-79, 84-106, 116-138, 151-173, 210-232, 253-275, 285-304, and 311-333; these read SWLL…IGII, IAFT…LNLM, VGIS…AYVL, IATL…TAPV, SVIF…FIGL, GATI…LSIY, VLYF…SLRI, FFIV…SKLI, and ILLG…AILG.

This sequence belongs to the UPF0324 family.

It localises to the cell membrane. The sequence is that of UPF0324 membrane protein gbs1193 from Streptococcus agalactiae serotype III (strain NEM316).